Reading from the N-terminus, the 490-residue chain is POC1 centriolar protein homolog B (490 aa).

WD repeat units follow at residues 16 to 55, 58 to 97, 100 to 139, 142 to 181, 184 to 223, 226 to 265, and 268 to 307; these read GHKD…RAFR, GHTD…ESTV, AHTA…FLYS, RHTN…CINI, DYGG…LIQH, VHNA…LIYT, and GHKG…LNYR. A compositionally biased stretch (polar residues) spans 375–388; it reads DGASSSRAQFTSGM. The disordered stretch occupies residues 375–427; it reads DGASSSRAQFTSGMDSGPFRTHTQAREEEDENQEERFAGGMTASPAERSGIPS. Residues 431-463 adopt a coiled-coil conformation; sequence STLENIVQQLDILTQTVAVLEERLTLTEDKLRT.

It belongs to the WD repeat POC1 family.

Its subcellular location is the cytoplasm. The protein localises to the cytoskeleton. The protein resides in the microtubule organizing center. It localises to the centrosome. It is found in the centriole. In terms of biological role, plays an important role in centriole assembly and/or stability and ciliogenesis. Involved in early steps of centriole duplication, as well as in the later steps of centriole length control. The polypeptide is POC1 centriolar protein homolog B (Danio rerio (Zebrafish)).